The primary structure comprises 132 residues: Translation initiation factor 5A (132 aa).

The residue at position 36 (Lys36) is a Hypusine.

This sequence belongs to the eIF-5A family.

The protein localises to the cytoplasm. Functions by promoting the formation of the first peptide bond. The chain is Translation initiation factor 5A (eIF5A) from Pyrobaculum arsenaticum (strain DSM 13514 / JCM 11321 / PZ6).